The sequence spans 890 residues: Bacteriocin BCN5 (890 aa).

SH3b domains lie at 22 to 84 (PPNA…TNAT) and 179 to 241 (ENNA…TNAT). The Peptidase M14 domain occupies 303–549 (GYVKYEGAAA…RYLQKIINAV (247 aa)). Residues H358, E361, and H475 each contribute to the Zn(2+) site. E525 acts as the Proton donor/acceptor in catalysis. In terms of domain architecture, SH3b 3 spans 572–636 (EATGEVINVQ…VNSGYIIILK (65 aa)). A hydrophobic region spans residues 815-869 (KALAAAVIVNGVETMFCAFLGGFIAQCIAPEFPIVAAVAGAIVSAIAAFAIGYFV).

It depends on Zn(2+) as a cofactor.

Functionally, may function as an ionophore. In Clostridium perfringens, this protein is Bacteriocin BCN5 (bcn).